The following is a 455-amino-acid chain: tRNA-2-methylthio-N(6)-dimethylallyladenosine synthase (455 aa).

In terms of domain architecture, MTTase N-terminal spans 18–136 (KLFFIQTYGC…FPEYLNRVKT (119 aa)). [4Fe-4S] cluster is bound by residues cysteine 27, cysteine 63, cysteine 97, cysteine 173, cysteine 177, and cysteine 180. Residues 159–389 (RKSDIKGFVT…VEIVNTGIAK (231 aa)) enclose the Radical SAM core domain. The TRAM domain maps to 392–455 (KDAEGKIYEV…SFSLIGEVEK (64 aa)).

This sequence belongs to the methylthiotransferase family. MiaB subfamily. As to quaternary structure, monomer. [4Fe-4S] cluster serves as cofactor.

It is found in the cytoplasm. The catalysed reaction is N(6)-dimethylallyladenosine(37) in tRNA + (sulfur carrier)-SH + AH2 + 2 S-adenosyl-L-methionine = 2-methylsulfanyl-N(6)-dimethylallyladenosine(37) in tRNA + (sulfur carrier)-H + 5'-deoxyadenosine + L-methionine + A + S-adenosyl-L-homocysteine + 2 H(+). In terms of biological role, catalyzes the methylthiolation of N6-(dimethylallyl)adenosine (i(6)A), leading to the formation of 2-methylthio-N6-(dimethylallyl)adenosine (ms(2)i(6)A) at position 37 in tRNAs that read codons beginning with uridine. This is tRNA-2-methylthio-N(6)-dimethylallyladenosine synthase from Clostridium beijerinckii (strain ATCC 51743 / NCIMB 8052) (Clostridium acetobutylicum).